The sequence spans 182 residues: Ribulose bisphosphate carboxylase small subunit, chloroplastic (182 aa).

The N-terminal 58 residues, 1–58 (MACSMISSATVAAVSRASPAQSSMVAPFTCLKSTSAFPVTQKTNNDITSIASNGGRVQ), are a transit peptide targeting the chloroplast.

This sequence belongs to the RuBisCO small chain family. In terms of assembly, heterohexadecamer of 8 large and 8 small subunits.

It localises to the plastid. Its subcellular location is the chloroplast. RuBisCO catalyzes two reactions: the carboxylation of D-ribulose 1,5-bisphosphate, the primary event in carbon dioxide fixation, as well as the oxidative fragmentation of the pentose substrate. Both reactions occur simultaneously and in competition at the same active site. Although the small subunit is not catalytic it is essential for maximal activity. The sequence is that of Ribulose bisphosphate carboxylase small subunit, chloroplastic from Betula pendula (European white birch).